The following is a 272-amino-acid chain: Ribosomal RNA large subunit methyltransferase E (272 aa).

Residues glycine 50, tryptophan 52, aspartate 68, aspartate 84, and aspartate 109 each contribute to the S-adenosyl-L-methionine site. Catalysis depends on lysine 149, which acts as the Proton acceptor. The region spanning 196-254 (PLRRGDKFVVDIEKLGSGGDGAVLIEGFVVFVKEVEVGEKVRIKIADVKPNFAFADVEE) is the TRAM domain.

This sequence belongs to the class I-like SAM-binding methyltransferase superfamily. RNA methyltransferase RlmE family.

It localises to the cytoplasm. It carries out the reaction uridine(2552) in 23S rRNA + S-adenosyl-L-methionine = 2'-O-methyluridine(2552) in 23S rRNA + S-adenosyl-L-homocysteine + H(+). Functionally, specifically methylates the uridine in position 2552 of 23S rRNA at the 2'-O position of the ribose in the fully assembled 50S ribosomal subunit. In Methanosarcina acetivorans (strain ATCC 35395 / DSM 2834 / JCM 12185 / C2A), this protein is Ribosomal RNA large subunit methyltransferase E.